A 174-amino-acid polypeptide reads, in one-letter code: Period clock protein (174 aa).

Residues 46 to 134 (SSEGTGAGTG…GTGTGTGTGT (89 aa)) are disordered. Tandem repeats lie at residues 49–50 (GT), 51–52 (GA), 53–54 (GT), 55–56 (GT), 57–58 (GT), 59–60 (GT), 61–62 (GT), 63–64 (GT), 65–66 (GT), 67–68 (GT), 69–70 (GT), 71–72 (GT), 73–74 (GT), 75–76 (GT), 77–78 (GT), 79–80 (GT), 81–82 (GT), 83–84 (GT), 85–86 (GT), 87–88 (GT), 89–90 (GT), 91–92 (GT), 93–94 (GT), 95–96 (GT), 97–98 (GT), 99–100 (GT), 101–102 (GT), 103–104 (GT), 105–106 (GT), 107–108 (GT), 109–110 (GT), 111–112 (GT), 113–114 (GT), 115–116 (GT), 117–118 (GT), 119–120 (GT), 121–122 (GT), 123–124 (GT), 125–126 (GT), 127–128 (GT), 129–130 (GT), 131–132 (GT), 133–134 (GT), 135–136 (GT), and 137–138 (GT). Residues 49 to 138 (GTGAGTGTGT…GTGTGTGTGT (90 aa)) form a 45 X 2 AA tandem repeats of G-[TA] region. The segment covering 50–134 (TGAGTGTGTG…GTGTGTGTGT (85 aa)) has biased composition (gly residues).

The protein resides in the plastid. It localises to the chloroplast. The protein is Period clock protein of Acetabularia acetabulum (Mermaid's wine glass).